Consider the following 23-residue polypeptide: NADP phosphatase 2 (23 aa).

As to quaternary structure, homodimer.

Its subcellular location is the cytoplasm. The protein is NADP phosphatase 2 of Arthrobacter sp. (strain KM).